An 898-amino-acid chain; its full sequence is Protein kintoun (898 aa).

Disordered regions lie at residues 558-680 (GELK…VESD) and 765-822 (ILGQ…SGIS). Basic and acidic residues predominate over residues 575–602 (INTRTVEDDTKVAKENVKKVDQETAHEG). Basic residues predominate over residues 603-616 (KKSKKNQRRKNKKR). Polar residues predominate over residues 641-656 (NEANSFEGTGSSSEAT).

Belongs to the PIH1 family. Kintoun subfamily.

It localises to the cytoplasm. In terms of biological role, required for cytoplasmic pre-assembly of axonemal dyneins, thereby playing a central role in motility in cilia and flagella. Involved in pre-assembly of dynein arm complexes in the cytoplasm before intraflagellar transport loads them for the ciliary compartment. This chain is Protein kintoun, found in Aedes aegypti (Yellowfever mosquito).